Consider the following 279-residue polypeptide: Phosphonates import ATP-binding protein PhnC (279 aa).

The 244-residue stretch at 2–245 (FQLKNVTRQF…AVAAIYGAET (244 aa)) folds into the ABC transporter domain. 34–41 (GRSGAGKS) is an ATP binding site.

This sequence belongs to the ABC transporter superfamily. Phosphonates importer (TC 3.A.1.9.1) family. As to quaternary structure, the complex is composed of two ATP-binding proteins (PhnC), two transmembrane proteins (PhnE) and a solute-binding protein (PhnD).

It localises to the cell inner membrane. It catalyses the reaction phosphonate(out) + ATP + H2O = phosphonate(in) + ADP + phosphate + H(+). In terms of biological role, part of the ABC transporter complex PhnCDE involved in phosphonates import. Responsible for energy coupling to the transport system. In Rhizobium meliloti (strain 1021) (Ensifer meliloti), this protein is Phosphonates import ATP-binding protein PhnC.